Reading from the N-terminus, the 501-residue chain is Iroquois-class homeodomain protein IRX-3 (501 aa).

The homeobox; TALE-type DNA-binding region spans 125-188 (FGDPSRPKNA…ANARRRLKKE (64 aa)). Residues 190 to 381 (KMTWAPRSRT…SPPGAAVAPS (192 aa)) form a disordered region. 2 stretches are compositionally biased toward acidic residues: residues 210–220 (REEEDEEEDEE) and 227–258 (ELEE…DLEN). A phosphoserine mark is found at Ser323 and Ser326. Residues 324–339 (LPSPPVSLDPCAPAPA) are compositionally biased toward pro residues.

This sequence belongs to the TALE/IRO homeobox family.

The protein localises to the nucleus. In terms of biological role, transcription factor involved in SHH-dependent neural patterning. Together with NKX2-2 and NKX6-1 acts to restrict the generation of motor neurons to the appropriate region of the neural tube. Belongs to the class I proteins of neuronal progenitor factors, which are repressed by SHH signals. Involved in the transcriptional repression of MNX1 in non-motor neuron cells. Acts as a regulator of energy metabolism. This is Iroquois-class homeodomain protein IRX-3 (IRX3) from Homo sapiens (Human).